Consider the following 131-residue polypeptide: Small ribosomal subunit protein uS11 (131 aa).

The protein belongs to the universal ribosomal protein uS11 family. In terms of assembly, part of the 30S ribosomal subunit.

Functionally, located on the platform of the 30S subunit. This Methanospirillum hungatei JF-1 (strain ATCC 27890 / DSM 864 / NBRC 100397 / JF-1) protein is Small ribosomal subunit protein uS11.